Consider the following 135-residue polypeptide: Large ribosomal subunit protein uL16c (135 aa).

This sequence belongs to the universal ribosomal protein uL16 family. Part of the 50S ribosomal subunit.

It is found in the plastid. It localises to the chloroplast. The chain is Large ribosomal subunit protein uL16c from Jasminum nudiflorum (Winter jasmine).